A 483-amino-acid chain; its full sequence is Phloretin 2'-O-glucosyltransferase (483 aa).

The Proton acceptor role is filled by His-15. Residue His-15 coordinates an anthocyanidin. Residue Asp-118 is the Charge relay of the active site. 8 residues coordinate UDP-alpha-D-glucose: Thr-140, Ala-360, Gln-362, His-377, Trp-380, Asn-381, Ser-382, and Glu-385. Ala-400 contributes to the an anthocyanidin binding site. Residues Glu-401 and Gln-402 each coordinate UDP-alpha-D-glucose.

The protein belongs to the UDP-glycosyltransferase family.

It catalyses the reaction phloretin + UDP-alpha-D-glucose = phlorizin + UDP + H(+). In terms of biological role, glycosyltransferase that possesses phloretin 2'-O-glycosyltransferase activity. Converts phloretin to phlorizin (phloretin 2'-O-glucoside), a potent antioxidant. Is specific for phloretin and does not possess glycosyltransferase activity toward caffeic acid, catechin, chlorogenic acid, 2-coumaric acid, 3-coumaric acid, 4-coumaric acid, cyanidin, 3,4-dihydroxyhydrocinnamic acid, epicatechin, 3-hydroxybenzoic acid, naringenin, 3,4-dihydroxybenzoic acid, quercetin and rutin. Can glycosylate phloretin in the presence of UDP-glucose, UDP-xylose and UDP-galactose. In Malus domestica (Apple), this protein is Phloretin 2'-O-glucosyltransferase.